Consider the following 312-residue polypeptide: uncharacterized protein (312 aa).

10 helical membrane-spanning segments follow: residues 11–31 (IAAI…KIAL), 46–66 (IAFA…SIRV), 72–92 (ILPL…FGLV), 98–118 (EAGI…AYVL), 128–148 (GFTV…GVDV), 155–171 (GSLL…MYNT), 183–203 (TELT…IALV), 221–241 (PGFV…TSFL), 254–274 (MSAF…VILN), and 277–297 (LAWY…GSNI). EamA domains follow at residues 18–142 (FIIG…FIFV) and 164–297 (LSSA…GSNI).

The protein belongs to the EamA transporter family.

It is found in the cell membrane. This is an uncharacterized protein from Bacillus subtilis (strain 168).